A 261-amino-acid polypeptide reads, in one-letter code: GTP cyclohydrolase FolE2 (261 aa).

This sequence belongs to the GTP cyclohydrolase IV family.

The enzyme catalyses GTP + H2O = 7,8-dihydroneopterin 3'-triphosphate + formate + H(+). It participates in cofactor biosynthesis; 7,8-dihydroneopterin triphosphate biosynthesis; 7,8-dihydroneopterin triphosphate from GTP: step 1/1. Converts GTP to 7,8-dihydroneopterin triphosphate. This chain is GTP cyclohydrolase FolE2, found in Herminiimonas arsenicoxydans.